Here is a 165-residue protein sequence, read N- to C-terminus: Sporulation-specific cell division protein SsgB (165 aa).

Residues 1 to 21 are disordered; sequence MLVGNSWTRSLEPVSGHEHTE.

This sequence belongs to the SsgA family. Interacts with SsgA. Interacts with FtsZ (via N-terminus).

It localises to the cell septum. Its function is as follows. Involved in sporulation-specific cell division. Required for early stages of sporulation. Important in the process of growth cessation prior to sporulation-specific cell division. Recruits cell division protein FtsZ to the future septum sites and tethers the contractile ring structure (Z ring) to the cytoplasmic membrane during sporulation. Stimulates polymerization and filament length of FtsZ in vitro. The chain is Sporulation-specific cell division protein SsgB from Kineococcus radiotolerans (strain ATCC BAA-149 / DSM 14245 / SRS30216).